Consider the following 195-residue polypeptide: Aminoglycoside 2'-N-acetyltransferase (195 aa).

Residues valine 21–aspartate 180 enclose the N-acetyltransferase domain. Substrate-binding positions include aspartate 45 and glutamate 92–alanine 93. Residues valine 94–valine 96 and arginine 101–alanine 106 each bind CoA. Substrate contacts are provided by residues serine 127 and glutamate 161–aspartate 162.

The protein belongs to the AAC(2')-I acetyltransferase family. Homodimer.

Confers resistance to gentamicin, tobramycin, dibekacin, netilmicin, and 6'-N-ethylnetilmicin. The chain is Aminoglycoside 2'-N-acetyltransferase (aac) from Mycolicibacterium fortuitum (Mycobacterium fortuitum).